Reading from the N-terminus, the 3503-residue chain is Protein dachsous (3503 aa).

Positions 1-20 (MLRSSLLILLAIVLLGSSQA) are cleaved as a signal peptide. The Extracellular segment spans residues 21-3045 (ASHDQERERK…SSSGSIGDWA (3025 aa)). 14 Cadherin domains span residues 22–121 (SHDQ…APTF), 122–233 (PQTS…QPIF), 234–340 (NQSR…QPTI), 345–451 (LSDD…PPEF), 452–558 (EQDL…EPIF), 559–662 (DQSF…RPVF), 663–774 (YPRE…PPIF), 775–878 (EKAR…APEF), 879–983 (EASM…PPVF), 984–1100 (EKDE…DPKF), 1101–1203 (QKSK…APEI), 1205–1312 (DPQE…RPTF), 1313–1432 (TSSS…APEW), and 1433–1549 (PQDP…APHF). 2 N-linked (GlcNAc...) asparagine glycosylation sites follow: Asn-220 and Asn-234. Position 236 is a phosphoserine (Ser-236). Residues Asn-245, Asn-381, and Asn-416 are each glycosylated (N-linked (GlcNAc...) asparagine). Asn-564, Asn-594, and Asn-743 each carry an N-linked (GlcNAc...) asparagine glycan. N-linked (GlcNAc...) asparagine glycans are attached at residues Asn-966, Asn-991, Asn-1006, Asn-1029, Asn-1143, and Asn-1236. 4 N-linked (GlcNAc...) asparagine glycosylation sites follow: Asn-1453, Asn-1479, Asn-1524, and Asn-1553. Cadherin domains lie at 1556–1666 (GGKT…PPRF), 1667–1794 (LQAV…SPEF), 1796–1899 (PGSC…APRF), 1900–2004 (KLSK…RPIF), 2005–2111 (ERYP…TPVL), 2114–2269 (QNET…SPKF), 2270–2375 (SQKQ…QPTF), 2375–2479 (FPPN…APVF), 2489–2595 (AILP…RSQF), 2596–2699 (LQNQ…FPIF), 2701–2809 (RSAK…EPKF), 2810–2916 (PLTE…TPQF), and 2919–3028 (RTYR…HPGT). N-linked (GlcNAc...) asparagine glycosylation is found at Asn-1700, Asn-1884, and Asn-1940. Asn-2115 is a glycosylation site (N-linked (GlcNAc...) asparagine). Residues 2193–2225 (GRALHYEEEIDESSEEDPNNSTRSQRALTSSSF) form a disordered region. Residues 2200–2210 (EEIDESSEEDP) are compositionally biased toward acidic residues. N-linked (GlcNAc...) asparagine glycosylation is found at Asn-2211 and Asn-2212. Positions 2211 to 2225 (NNSTRSQRALTSSSF) are enriched in polar residues. N-linked (GlcNAc...) asparagine glycans are attached at residues Asn-2421, Asn-2511, Asn-2520, Asn-2547, Asn-2588, and Asn-2678. Asn-2845 and Asn-2967 each carry an N-linked (GlcNAc...) asparagine glycan. The helical transmembrane segment at 3046-3066 (IGLLVAFLLVLCAAAGIFLFI) threads the bilayer. Residues 3067–3503 (HMRSRKPRNA…SQRGNVGTRM (437 aa)) are Cytoplasmic-facing. Disordered stretches follow at residues 3114-3195 (AGAA…GRIS), 3360-3404 (LSEH…IPPP), and 3431-3503 (LPRS…GTRM). 2 stretches are compositionally biased toward low complexity: residues 3133–3159 (GAHAGSSGAATTSELSGSEQSGSSGRG) and 3363–3372 (HSGSGASSSA). The span at 3391–3404 (KPPPSAPPTHIPPP) shows a compositional bias: pro residues. A compositionally biased stretch (low complexity) spans 3440-3463 (ASGSFSTSSAMSPSFSPSLSPLAT). A phosphoserine mark is found at Ser-3465 and Ser-3469. Over residues 3492–3503 (QPSQRGNVGTRM) the composition is skewed to polar residues.

Interacts (via cytoplasmic region) with Myo31DF. In terms of processing, phosphorylated by fj on Ser/Thr of cadherin domains. In terms of tissue distribution, expressed in embryonic ectoderm. In larvae, expression is restricted to imaginal disks and brain.

The protein resides in the cell membrane. Its subcellular location is the cell junction. Its function is as follows. Required for normal morphogenesis of adult structures derived from imaginal disks. Plays a role in planar cell polarity and in determining body left-right asymmetry. Expression in segment H1 of the imaginal ring and interaction with Myo31DF are required to induce changes of cell shape and orientation in segment H2, which then gives rise to normal, dextral looping of the adult hindgut. The polypeptide is Protein dachsous (ds) (Drosophila melanogaster (Fruit fly)).